A 104-amino-acid chain; its full sequence is Integration host factor subunit alpha (104 aa).

This sequence belongs to the bacterial histone-like protein family. As to quaternary structure, heterodimer of an alpha and a beta chain.

In terms of biological role, this protein is one of the two subunits of integration host factor, a specific DNA-binding protein that functions in genetic recombination as well as in transcriptional and translational control. The protein is Integration host factor subunit alpha of Bartonella quintana (strain Toulouse) (Rochalimaea quintana).